Here is a 264-residue protein sequence, read N- to C-terminus: Proteasome subunit alpha type-4 (264 aa).

This sequence belongs to the peptidase T1A family. In terms of assembly, the 26S proteasome consists of a 20S proteasome core and two 19S regulatory subunits. The 20S proteasome core is composed of 28 subunits that are arranged in four stacked rings, resulting in a barrel-shaped structure. The two end rings are each formed by seven alpha subunits, and the two central rings are each formed by seven beta subunits. The catalytic chamber with the active sites is on the inside of the barrel. Interacts with PI31.

Its subcellular location is the cytoplasm. It is found in the nucleus. Functionally, the proteasome is a multicatalytic proteinase complex which is characterized by its ability to cleave peptides with Arg, Phe, Tyr, Leu, and Glu adjacent to the leaving group at neutral or slightly basic pH. The proteasome has an ATP-dependent proteolytic activity. This chain is Proteasome subunit alpha type-4 (Prosalpha3), found in Drosophila melanogaster (Fruit fly).